Consider the following 424-residue polypeptide: Virion nicking-joining enzyme (424 aa).

PLD phosphodiesterase domains are found at residues L110 to S137 and Y320 to Y346.

This sequence belongs to the orthopoxvirus OPG042 family.

It is found in the virion. Its function is as follows. DNA nicking enzyme that cleaves extruded cruciform DNA at its tip. Probably nicks viral hairpins. In Homo sapiens (Human), this protein is Virion nicking-joining enzyme (OPG042).